The following is a 238-amino-acid chain: Small ribosomal subunit protein uS3 (238 aa).

A KH type-2 domain is found at 39-107 (MREFIHDYAK…ELHLNIVEIR (69 aa)). Residues 212–222 (PQAHDRRHSEA) are compositionally biased toward basic and acidic residues. The interval 212-238 (PQAHDRRHSEAQEGAAPRPPRRDRERA) is disordered.

This sequence belongs to the universal ribosomal protein uS3 family. In terms of assembly, part of the 30S ribosomal subunit. Forms a tight complex with proteins S10 and S14.

Binds the lower part of the 30S subunit head. Binds mRNA in the 70S ribosome, positioning it for translation. The chain is Small ribosomal subunit protein uS3 from Cereibacter sphaeroides (strain ATCC 17025 / ATH 2.4.3) (Rhodobacter sphaeroides).